The chain runs to 497 residues: 3-octaprenyl-4-hydroxybenzoate carboxy-lyase (497 aa).

Asparagine 175 lines the Mn(2+) pocket. Prenylated FMN contacts are provided by residues 178–180, 192–194, and 197–198; these read IYR, RWL, and RG. Glutamate 241 provides a ligand contact to Mn(2+). The active-site Proton donor is the aspartate 290.

It belongs to the UbiD family. As to quaternary structure, homohexamer. Prenylated FMN is required as a cofactor. The cofactor is Mn(2+).

It localises to the cell membrane. It carries out the reaction a 4-hydroxy-3-(all-trans-polyprenyl)benzoate + H(+) = a 2-(all-trans-polyprenyl)phenol + CO2. It functions in the pathway cofactor biosynthesis; ubiquinone biosynthesis. Functionally, catalyzes the decarboxylation of 3-octaprenyl-4-hydroxy benzoate to 2-octaprenylphenol, an intermediate step in ubiquinone biosynthesis. The polypeptide is 3-octaprenyl-4-hydroxybenzoate carboxy-lyase (Shigella flexneri).